The primary structure comprises 510 residues: Archaeosine synthase subunit alpha (510 aa).

One can recognise a PUA domain in the interval 427 to 510 (LGKFTINKAS…LKKGIAVKVR (84 aa)).

The protein belongs to the archaeosine synthase type 1 family. In terms of assembly, forms a robust complex with the archaeosine synthase beta subunit RaSEA, likely an alpha(2)beta(2) heterotetrameric structure. Formation of this complex highly increases lysine transfer activity.

It catalyses the reaction 7-cyano-7-carbaguanosine(15) in tRNA + L-lysine = 7-N-[(5S)-5-amino-5-carboxypentyl]formamidino-7-deazaguanosine(15) in tRNA. It participates in tRNA modification; archaeosine-tRNA biosynthesis. Its function is as follows. Functions in the biosynthesis of archaeosine, a modified nucleoside present in the dihydrouridine loop (D-loop) of archaeal tRNAs. Catalyzes the addition of L-lysine to the cyano group of 7-cyano-7-deazaguanine (preQ0)-modified tRNAs at position 15, to generate q0kN15-tRNA, a q0N lysine adduct identified as 7-N-[(5S)-5-amino-5-carboxypentyl]formamidino-7-deazaguanosine. The protein is Archaeosine synthase subunit alpha of Thermoplasma acidophilum (strain ATCC 25905 / DSM 1728 / JCM 9062 / NBRC 15155 / AMRC-C165).